The following is a 417-amino-acid chain: Phosphoglycerate kinase 2 (417 aa).

14 residues coordinate (2R)-3-phosphoglycerate: Val-23, Asp-24, Phe-25, Asn-26, Asn-38, Arg-39, Ser-62, His-63, Gly-65, Arg-66, Leu-121, Arg-122, His-168, and Arg-169. Gly-212 provides a ligand contact to ADP. A CDP-binding site is contributed by Gly-212. AMP contacts are provided by Ala-213 and Lys-214. Ala-213 serves as a coordination point for ATP. Ala-213 serves as a coordination point for Mg(2+). Asp-217 serves as a coordination point for CDP. Residue Asp-217 coordinates Mg(2+). Lys-218 lines the AMP pocket. Residue Lys-218 coordinates ATP. Residue Gly-236 coordinates ADP. Gly-236 provides a ligand contact to CDP. Residues Gly-237 and Gly-312 each contribute to the AMP site. Positions 237 and 312 each coordinate ATP. CDP is bound by residues Gly-337 and Phe-342. Phe-342 serves as a coordination point for ADP. Glu-343 serves as a coordination point for AMP. ATP contacts are provided by Glu-343, Asp-374, and Thr-375. Mg(2+) is bound at residue Asp-374.

The protein belongs to the phosphoglycerate kinase family. As to quaternary structure, monomer. It depends on Mg(2+) as a cofactor.

Its subcellular location is the cytoplasm. The protein resides in the mitochondrion. The enzyme catalyses (2R)-3-phosphoglycerate + ATP = (2R)-3-phospho-glyceroyl phosphate + ADP. Its pathway is carbohydrate degradation; glycolysis; pyruvate from D-glyceraldehyde 3-phosphate: step 2/5. Catalyzes one of the two ATP producing reactions in the glycolytic pathway via the reversible conversion of 1,3-diphosphoglycerate to 3-phosphoglycerate. Both L- and D- forms of purine and pyrimidine nucleotides can be used as substrates, but the activity is much lower on pyrimidines. Negatively regulates the biosynthesis of acetyl-CoA from pyruvate in the mitochondrion. This chain is Phosphoglycerate kinase 2 (PGK2), found in Rhizopus niveus.